The sequence spans 216 residues: Octanoyltransferase (216 aa).

Positions 24–212 (KFRKECILFL…NLCSFLEPIN (189 aa)) constitute a BPL/LPL catalytic domain. Substrate contacts are provided by residues 69-76 (RGGDFTAH), 140-142 (SIG), and 153-155 (GIA). Cys-171 acts as the Acyl-thioester intermediate in catalysis.

Belongs to the LipB family.

It is found in the cytoplasm. The enzyme catalyses octanoyl-[ACP] + L-lysyl-[protein] = N(6)-octanoyl-L-lysyl-[protein] + holo-[ACP] + H(+). Its pathway is protein modification; protein lipoylation via endogenous pathway; protein N(6)-(lipoyl)lysine from octanoyl-[acyl-carrier-protein]: step 1/2. Catalyzes the transfer of endogenously produced octanoic acid from octanoyl-acyl-carrier-protein onto the lipoyl domains of lipoate-dependent enzymes. Lipoyl-ACP can also act as a substrate although octanoyl-ACP is likely to be the physiological substrate. The chain is Octanoyltransferase from Leptospira interrogans serogroup Icterohaemorrhagiae serovar copenhageni (strain Fiocruz L1-130).